Here is a 178-residue protein sequence, read N- to C-terminus: Thymidine kinase (178 aa).

13–20 (GPMFAGKS) lines the ATP pocket. The Proton acceptor role is filled by Glu-85. Position 115 (Phe-115) interacts with substrate. Cys-140 and Cys-143 together coordinate Zn(2+). 159–163 (IEIIG) provides a ligand contact to substrate. Cys-172 and Cys-175 together coordinate Zn(2+).

The protein belongs to the thymidine kinase family.

The catalysed reaction is thymidine + ATP = dTMP + ADP + H(+). In Myxoma virus (strain Uriarra) (MYXV), this protein is Thymidine kinase (TK).